Here is a 502-residue protein sequence, read N- to C-terminus: uncharacterized protein (502 aa).

2 consecutive transmembrane segments (helical) span residues 10–30 (NLTL…IXIF) and 473–493 (FSLI…FGLV).

It is found in the cell membrane. This is an uncharacterized protein from Borreliella burgdorferi (strain ATCC 35210 / DSM 4680 / CIP 102532 / B31) (Borrelia burgdorferi).